We begin with the raw amino-acid sequence, 310 residues long: MKITTKVLIIGSGPAGLSAAIYTARSSLKPILINGMQPGGQLTMTTDVENYPGFAKTIQGPWLMEQMSIQAKNVGTEIINDYVERVDLSKRPFKIFTGTGNKYEADSIIICTGAESKWLGITSEQEFRGFGVSSCAICDGFFFKNQDIVVVGGGNSALEEALYLTNHANKVTVVHRRNSFRAEKILQDRLFKNPKISVIWDHVIDEIVGSNQPKTVTGVKIKNVYTNEINLVNCSGVFIAIGHTPNTTLFNGQIAIDDDNYIITQTGSTRTSVEGVFAAGDVQDKIYRQAITAAASGCMAALEVAKFLNK.

34-41 (NGMQPGGQ) is an FAD binding site. A disulfide bridge links cysteine 135 with cysteine 138. Residue 281–290 (DVQDKIYRQA) participates in FAD binding.

The protein belongs to the class-II pyridine nucleotide-disulfide oxidoreductase family. In terms of assembly, homodimer. FAD serves as cofactor.

The protein resides in the cytoplasm. It catalyses the reaction [thioredoxin]-dithiol + NADP(+) = [thioredoxin]-disulfide + NADPH + H(+). The protein is Thioredoxin reductase (trxB) of Rickettsia typhi (strain ATCC VR-144 / Wilmington).